The following is a 798-amino-acid chain: Integrin beta-1 (798 aa).

The first 20 residues, 1–20, serve as a signal peptide directing secretion; the sequence is MNLQPIFWIGLISSICCVFA. Residues 26–76 enclose the PSI domain; that stretch reads RCLKANAKSCGECIQAGPNCGWCTNSTFLQEGMPTSARCDDLEALKKKGCP. 28 disulfide bridges follow: Cys-27–Cys-45, Cys-35–Cys-464, Cys-38–Cys-64, Cys-48–Cys-75, Cys-207–Cys-213, Cys-261–Cys-301, Cys-401–Cys-415, Cys-435–Cys-462, Cys-466–Cys-486, Cys-477–Cys-489, Cys-491–Cys-500, Cys-502–Cys-533, Cys-516–Cys-531, Cys-525–Cys-536, Cys-538–Cys-553, Cys-555–Cys-576, Cys-560–Cys-574, Cys-568–Cys-579, Cys-581–Cys-590, Cys-592–Cys-615, Cys-599–Cys-613, Cys-607–Cys-618, Cys-620–Cys-630, Cys-633–Cys-636, Cys-640–Cys-691, Cys-646–Cys-665, Cys-649–Cys-661, and Cys-699–Cys-723. An N-linked (GlcNAc...) asparagine glycan is attached at Asn-50. Residues 75–107 form a disordered region; sequence CPPDDIENPRGSKDIKKNKNVTNRSKGTAEKLK. Residues 81–91 are compositionally biased toward basic and acidic residues; the sequence is ENPRGSKDIKK. Residues Asn-94 and Asn-97 are each glycosylated (N-linked (GlcNAc...) asparagine). The region spanning 140-378 is the VWFA domain; sequence DYPIDLYYLM…QLIIDAYNSL (239 aa). Mg(2+)-binding residues include Ser-152 and Ser-154. Ca(2+)-binding residues include Ser-154, Asp-157, Asp-158, and Glu-189. Positions 207–213 are CX3CL1-binding; the sequence is CTSEQNC. Asn-212 carries N-linked (GlcNAc...) asparagine glycosylation. Asn-244, Asp-246, Pro-248, and Glu-249 together coordinate Ca(2+). A Mg(2+)-binding site is contributed by Glu-249. An N-linked (GlcNAc...) asparagine glycan is attached at Asn-269. The interval 295–314 is CX3CL1-binding; it reads LPNDGQCHLENNMYTMSHYY. Residue Ala-362 coordinates Ca(2+). Residues Asn-363, Asn-406, and Asn-417 are each glycosylated (N-linked (GlcNAc...) asparagine). The segment at 383-465 is interaction with TMEM182; the sequence is ILENSKLSEG…VILQYICECE (83 aa). I-EGF domains are found at residues 466-501, 502-554, 555-591, and 592-631; these read CQSEGIPESPKCHEGNGTFECGACRCNEGRVGRHCE, CSTD…KFCE, CDNFNCDRSNGLICGGNGVCKCRVCECNPNYTGSACD, and CSLDTSTCEASNGQICNGRGICECGVCKCTDPKFQGQTCE. Asn-481 is a glycosylation site (N-linked (GlcNAc...) asparagine). Asn-520 is a glycosylation site (N-linked (GlcNAc...) asparagine). Asn-584 is a glycosylation site (N-linked (GlcNAc...) asparagine). An N-linked (GlcNAc...) asparagine glycan is attached at Asn-669. Residues 729–749 traverse the membrane as a helical segment; it reads IIPIVAGVVAGIVLIGLALLL. Residues 762 to 767 are signal for sorting from recycling endosomes; interaction with ACAP1; it reads EFAKFE. Thr-777 carries the post-translational modification Phosphothreonine. Tyr-783 is subject to Phosphotyrosine. A Phosphoserine modification is found at Ser-785. The interaction with ITGB1BP1 stretch occupies residues 785–792; it reads SAVTTVVN. Thr-789 is subject to Phosphothreonine. At Lys-794 the chain carries N6-acetyllysine; alternate. Lys-794 is covalently cross-linked (Glycyl lysine isopeptide (Lys-Gly) (interchain with G-Cter in SUMO1); alternate).

The protein belongs to the integrin beta chain family. In terms of assembly, interacts with seprase FAP (seprase); the interaction occurs at the cell surface of invadopodia membrane in a collagen-dependent manner. Heterodimer of an alpha and a beta subunit. Beta-1 associates with either alpha-1, alpha-2, alpha-3, alpha-4, alpha-5, alpha-6, alpha-7, alpha-8, alpha-9, alpha-10, alpha-11 or alpha-V. ITGA6:ITGB1 is found in a complex with CD9; interaction takes place in oocytes and is involved in sperm-egg fusion. Binds LGALS3BP and NMRK2, when associated with alpha-7, but not with alpha-5. Interacts with FLNA, FLNB, FLNC and RANBP9. Interacts with KRT1 in the presence of RACK1 and SRC. Interacts with JAML; integrin alpha-4/beta-1 may regulate leukocyte to endothelial cells adhesion by controlling JAML homodimerization. Interacts with RAB21. Interacts (via the cytoplasmic region) with RAB25 (via the hypervariable C-terminal region). Interacts with MYO10. Interacts with ITGB1BP1 (via C-terminal region); the interaction is a prerequisite for focal adhesion disassembly. Interacts with TLN1; the interaction is prevented by competitive binding of ITGB1BP1. Interacts with ACAP1; required for ITGB1 recycling. Interacts with ASAP3. Interacts with FERMT2; the interaction is inhibited in presence of ITGB1BP1. Interacts with DAB2. Interacts with FGR and HCK. Interacts with alpha-7A and alpha-7B in adult skeletal muscle. Interacts with alpha-7B in cardiomyocytes of adult heart. Interacts with EMP2; the interaction may be direct or indirect and ITGB1 has a heterodimer form. ITGA5:ITGB1 interacts with CCN3. ITGA4:ITGB1 is found in a ternary complex with CX3CR1 and CX3CL1. ITGA5:ITGB1 interacts with FBN1. ITGA5:ITGB1 acts as a receptor for fibronectin FN1 and mediates R-G-D-dependent cell adhesion to FN1. ITGA5:ITGB1 interacts with IL1B. Interacts with MDK. ITGA4:ITGB1 interacts with MDK; this interaction mediates MDK-induced osteoblast cells migration through PXN phosphorylation. ITGA6:ITGB1 interacts with MDK; this interaction mediates MDK-induced neurite-outgrowth. ITGA5:ITGB1 interacts with ACE2. Interacts with TMEM182 and LAMB1. Interacts with tensin TNS3; TNS3 also interacts with PEAK1, thus acting as an adapter molecule to bridge the association of PEAK1 with ITGB1. Interacts with tensin TNS4; the interaction displaces tensin TNS3 from the ITGB1 cytoplasmic tail and promotes ITGB1 stability. Integrin ITGA9:ITGB1 interacts with SPP1/OPN (via N-terminus). Integrin ITGA9:ITGB1 interacts with TNC/TNFN3 (via the 3rd Fibronectin type-III domain). Integrins ITGA4:ITGB1 and ITGA9:ITGB1 interact with SVEP1 (via Sushi domain 21); thereby inhibit Ca(2+) intracellular signaling and as a result repress vasocontraction. ITGA4:ITGB1 and ITGA5:ITGB1 interacts with SELP. Interacts with CD248. ITGA5:ITGB1 interacts with IGFBP1. ITGA4:ITGB1 interacts with BCAM. Interacts with ADGRG6.

Its subcellular location is the cell membrane. The protein localises to the cell projection. It is found in the invadopodium membrane. It localises to the ruffle membrane. The protein resides in the recycling endosome. Its subcellular location is the melanosome. The protein localises to the lamellipodium. It is found in the ruffle. It localises to the cell junction. The protein resides in the focal adhesion. Its function is as follows. Integrins alpha-1/beta-1, alpha-2/beta-1, alpha-10/beta-1 and alpha-11/beta-1 are receptors for collagen. Integrins alpha-1/beta-1 and alpha-2/beta-2 recognize the proline-hydroxylated sequence G-F-P-G-E-R in collagen. Integrins alpha-2/beta-1, alpha-3/beta-1, alpha-4/beta-1, alpha-5/beta-1, alpha-8/beta-1, alpha-10/beta-1, alpha-11/beta-1 and alpha-V/beta-1 are receptors for fibronectin. Alpha-4/beta-1 recognizes one or more domains within the alternatively spliced CS-1 and CS-5 regions of fibronectin. Integrin alpha-5/beta-1 is a receptor for fibrinogen. Integrin alpha-1/beta-1, alpha-2/beta-1, alpha-6/beta-1 and alpha-7/beta-1 are receptors for lamimin. Integrin alpha-6/beta-1 (ITGA6:ITGB1) is present in oocytes and is involved in sperm-egg fusion. Integrin alpha-4/beta-1 is a receptor for VCAM1 and recognizes the sequence Q-I-D-S in VCAM1. Integrin alpha-9/beta-1 is a receptor for VCAM1, cytotactin and osteopontin. It recognizes the sequence A-E-I-D-G-I-E-L in cytotactin. Integrin alpha-3/beta-1 is a receptor for epiligrin, thrombospondin and CSPG4. Integrin alpha-3/beta-1 provides a docking site for FAP (seprase) at invadopodia plasma membranes in a collagen-dependent manner and hence may participate in the adhesion, formation of invadopodia and matrix degradation processes, promoting cell invasion. Alpha-3/beta-1 may mediate with LGALS3 the stimulation by CSPG4 of endothelial cells migration. Integrin alpha-V/beta-1 is a receptor for vitronectin. Beta-1 integrins recognize the sequence R-G-D in a wide array of ligands. When associated with alpha-7/beta-1 integrin, regulates cell adhesion and laminin matrix deposition. Involved in promoting endothelial cell motility and angiogenesis. Involved in osteoblast compaction through the fibronectin fibrillogenesis cell-mediated matrix assembly process and the formation of mineralized bone nodules. May be involved in up-regulation of the activity of kinases such as PKC via binding to KRT1. Together with KRT1 and RACK1, serves as a platform for SRC activation or inactivation. Plays a mechanistic adhesive role during telophase, required for the successful completion of cytokinesis. ITGA4:ITGB1 binds to fractalkine (CX3CL1) and may act as its coreceptor in CX3CR1-dependent fractalkine signaling. ITGA4:ITGB1 and ITGA5:ITGB1 bind to PLA2G2A via a site (site 2) which is distinct from the classical ligand-binding site (site 1) and this induces integrin conformational changes and enhanced ligand binding to site 1. ITGA5:ITGB1 acts as a receptor for fibrillin-1 (FBN1) and mediates R-G-D-dependent cell adhesion to FBN1. ITGA5:ITGB1 is a receptor for IL1B and binding is essential for IL1B signaling. ITGA5:ITGB3 is a receptor for soluble CD40LG and is required for CD40/CD40LG signaling. Plays an important role in myoblast differentiation and fusion during skeletal myogenesis. ITGA9:ITGB1 may play a crucial role in SVEP1/polydom-mediated myoblast cell adhesion. Integrins ITGA9:ITGB1 and ITGA4:ITGB1 repress PRKCA-mediated L-type voltage-gated channel Ca(2+) influx and ROCK-mediated calcium sensitivity in vascular smooth muscle cells via their interaction with SVEP1, thereby inhibit vasocontraction. The chain is Integrin beta-1 (ITGB1) from Pongo abelii (Sumatran orangutan).